The sequence spans 648 residues: cAMP-dependent protein kinase catalytic subunit (648 aa).

Low complexity-rich tracts occupy residues 1-20, 46-67, 136-175, and 232-254; these read MSNS…TINN, SGNN…NSSG, QQQP…PQQQ, and NTPS…NPHT. 4 disordered regions span residues 1–25, 40–86, 121–175, and 219–290; these read MSNS…KVNV, GGGG…TKMD, KVPS…PQQQ, and QQQQ…DTNP. The segment covering 255–290 has biased composition (polar residues); that stretch reads SGLSLQHAHSSYTPSNVLHSPTHFQSSLPTRLDTNP. The 255-residue stretch at 336–590 folds into the Protein kinase domain; sequence FKQIRVIGTG…ALDVKNHRWF (255 aa). ATP contacts are provided by residues 342–350 and Lys-365; that span reads IGTGTFGKV. Asp-459 serves as the catalytic Proton acceptor. Thr-490 carries the phosphothreonine modification. One can recognise an AGC-kinase C-terminal domain in the interval 591 to 648; it reads SDINWERLYQRRDNGPFIPKIQHQGDSSNFEMYDEEEMVEEPPSSNYVDPYAHLFKDF.

Belongs to the protein kinase superfamily. AGC Ser/Thr protein kinase family. cAMP subfamily. As to quaternary structure, in Dictyostelium the holoenzyme is a dimer composed of a regulatory (R) and a catalytic (C) subunit. In the presence of cAMP it dissociates into the active C subunit and an R monomer.

It carries out the reaction L-seryl-[protein] + ATP = O-phospho-L-seryl-[protein] + ADP + H(+). It catalyses the reaction L-threonyl-[protein] + ATP = O-phospho-L-threonyl-[protein] + ADP + H(+). In terms of biological role, essential for differentiation and fruit morphogenesis. This is cAMP-dependent protein kinase catalytic subunit (pkaC) from Dictyostelium discoideum (Social amoeba).